Reading from the N-terminus, the 256-residue chain is Tetraspanin-32 (256 aa).

Transmembrane regions (helical) follow at residues 15 to 35 (LITN…VVVI), 61 to 81 (AFYV…LSTI), 90 to 110 (LMAA…QVAF), and 203 to 223 (CTSL…WFAI).

It belongs to the tetraspanin (TM4SF) family. In terms of tissue distribution, expressed exclusively in hematopoietic tissues. Expression detected in spleen, thymus, bone marrow and peripheral blood leukocytes but not in heart, brain, lung, liver, kidney or testis.

Its subcellular location is the membrane. This is Tetraspanin-32 (Tspan32) from Mus musculus (Mouse).